A 302-amino-acid polypeptide reads, in one-letter code: Glutaminase (302 aa).

Positions 61, 111, 155, 162, 186, 238, and 256 each coordinate substrate.

It belongs to the glutaminase family. In terms of assembly, homotetramer.

The catalysed reaction is L-glutamine + H2O = L-glutamate + NH4(+). The polypeptide is Glutaminase (Ectopseudomonas mendocina (strain ymp) (Pseudomonas mendocina)).